The primary structure comprises 462 residues: Dipeptidyl peptidase 1 (462 aa).

An N-terminal signal peptide occupies residues Met1–Ser24. 2 N-linked (GlcNAc...) asparagine glycosylation sites follow: Asn29 and Asn53. 5 disulfides stabilise this stretch: Cys30–Cys118, Cys54–Cys136, Cys254–Cys297, Cys290–Cys330, and Cys320–Cys336. The propeptide occupies Ala135 to Leu230. Cys257 is a catalytic residue. N-linked (GlcNAc...) asparagine glycosylation occurs at Asn275. Phe301 and Tyr303 together coordinate chloride. Tyr346 serves as a coordination point for chloride. Catalysis depends on residues His404 and Asn426.

Belongs to the peptidase C1 family. As to quaternary structure, tetramer of heterotrimers consisting of exclusion domain, heavy- and light chains. The cofactor is chloride. In terms of tissue distribution, broadly distributed, but higher levels found in lung, liver, kidney and spleen. Lower levels found in testis and brain.

The protein localises to the lysosome. It carries out the reaction Release of an N-terminal dipeptide, Xaa-Yaa-|-Zaa-, except when Xaa is Arg or Lys, or Yaa or Zaa is Pro.. Functionally, thiol protease. Has dipeptidylpeptidase activity. Active against a broad range of dipeptide substrates composed of both polar and hydrophobic amino acids. Proline cannot occupy the P1 position and arginine cannot occupy the P2 position of the substrate. Can act as both an exopeptidase and endopeptidase. Activates serine proteases such as elastase, cathepsin G and granzymes A and B. This chain is Dipeptidyl peptidase 1 (Ctsc), found in Mus musculus (Mouse).